Reading from the N-terminus, the 180-residue chain is Flavodoxin 2 (180 aa).

Positions Ile-4–Ala-173 constitute a Flavodoxin-like domain. FMN-binding positions include Ser-10–Thr-15, Thr-57, Gly-61, Asp-99, Asn-106–Leu-108, and Asp-155.

The cofactor is FMN.

Its function is as follows. Flavodoxins are low-potential electron donors to a number of redox enzymes. NifF is the electron donor to nitrogenase, and is thus implicated in nitrogen fixation. Does not function as an electron donor to nitrite reductase. This Azotobacter vinelandii protein is Flavodoxin 2.